The following is a 901-amino-acid chain: HTH-type transcriptional regulator MalT (901 aa).

39 to 46 (SPAGYGKT) provides a ligand contact to ATP. Residues 829 to 894 (ELIRTSPLTQ…AAVQHAQKLL (66 aa)) form the HTH luxR-type domain. Positions 853 to 872 (NEQIAGELEVAATTIKTHIR) form a DNA-binding region, H-T-H motif.

This sequence belongs to the MalT family. In terms of assembly, monomer in solution. Oligomerizes to an active state in the presence of the positive effectors ATP and maltotriose.

With respect to regulation, activated by ATP and maltotriose, which are both required for DNA binding. In terms of biological role, positively regulates the transcription of the maltose regulon whose gene products are responsible for uptake and catabolism of malto-oligosaccharides. Specifically binds to the promoter region of its target genes, recognizing a short DNA motif called the MalT box. The sequence is that of HTH-type transcriptional regulator MalT from Escherichia coli O7:K1 (strain IAI39 / ExPEC).